The sequence spans 149 residues: Transcriptional repressor NrdR (149 aa).

A zinc finger spans residues 3–34; sequence CPFCGHAATQVIDTRMSEEGDTVRRRRRCESC. Residues 49–139 form the ATP-cone domain; the sequence is PAVVKKNGSR…VYRSFEDVSE (91 aa).

This sequence belongs to the NrdR family. Zn(2+) serves as cofactor.

In terms of biological role, negatively regulates transcription of bacterial ribonucleotide reductase nrd genes and operons by binding to NrdR-boxes. The polypeptide is Transcriptional repressor NrdR (Ralstonia nicotianae (strain ATCC BAA-1114 / GMI1000) (Ralstonia solanacearum)).